Here is an 86-residue protein sequence, read N- to C-terminus: Protein Tat (86 aa).

The tract at residues 1–21 (MDPVDPNLEPWNHPGSQPKTA) is disordered. Residues 1 to 24 (MDPVDPNLEPWNHPGSQPKTACNR) are interaction with human CREBBP. Positions 1 to 48 (MDPVDPNLEPWNHPGSQPKTACNRCHCKKCCYHCQVCFITKGLGISYG) are transactivation. The Zn(2+) site is built by Cys-22, Cys-25, and Cys-27. A cysteine-rich region spans residues 22–37 (CNRCHCKKCCYHCQVC). An N6-acetyllysine; by host PCAF modification is found at Lys-28. The Zn(2+) site is built by Cys-30, His-33, Cys-34, and Cys-37. The core stretch occupies residues 38 to 48 (FITKGLGISYG). A disordered region spans residues 47-86 (YGRKKRRQRRRPSQGGQTHQDPIPKQPSSQPRGNPTGPKE). Residues 48-58 (GRKKRRQRRRP) show a composition bias toward basic residues. Residues 49–57 (RKKRRQRRR) carry the Nuclear localization signal, RNA-binding (TAR), and protein transduction motif. The interaction with the host capping enzyme RNGTT stretch occupies residues 49–86 (RKKRRQRRRPSQGGQTHQDPIPKQPSSQPRGNPTGPKE). N6-acetyllysine; by host EP300 and GCN5L2 occurs at positions 50 and 51. Arg-52 and Arg-53 each carry asymmetric dimethylarginine; by host PRMT6. Residues 60 to 79 (QGGQTHQDPIPKQPSSQPRG) show a composition bias toward polar residues. Lys-71 participates in a covalent cross-link: Glycyl lysine isopeptide (Lys-Gly) (interchain with G-Cter in ubiquitin).

Belongs to the lentiviruses Tat family. Interacts with host CCNT1. Associates with the P-TEFb complex composed at least of Tat, P-TEFb (CDK9 and CCNT1), TAR RNA, RNA Pol II. Recruits the HATs CREBBP, TAF1/TFIID, EP300, PCAF and GCN5L2. Interacts with host KAT5/Tip60; this interaction targets the latter to degradation. Interacts with the host deacetylase SIRT1. Interacts with host capping enzyme RNGTT; this interaction stimulates RNGTT. Binds to host KDR, and to the host integrins ITGAV/ITGB3 and ITGA5/ITGB1. Interacts with host KPNB1/importin beta-1 without previous binding to KPNA1/importin alpha-1. Interacts with EIF2AK2. Interacts with host nucleosome assembly protein NAP1L1; this interaction may be required for the transport of Tat within the nucleus, since the two proteins interact at the nuclear rim. Interacts with host C1QBP/SF2P32; this interaction involves lysine-acetylated Tat. Interacts with the host chemokine receptors CCR2, CCR3 and CXCR4. Interacts with host DPP4/CD26; this interaction may trigger an anti-proliferative effect. Interacts with host LDLR. Interacts with the host extracellular matrix metalloproteinase MMP1. Interacts with host PRMT6; this interaction mediates Tat's methylation. Interacts with, and is ubiquitinated by MDM2/Hdm2. Interacts with host PSMC3 and HTATIP2. Interacts with STAB1; this interaction may overcome SATB1-mediated repression of IL2 and IL2RA (interleukin) in T cells by binding to the same domain than HDAC1. Interacts (when acetylated) with human CDK13, thereby increasing HIV-1 mRNA splicing and promoting the production of the doubly spliced HIV-1 protein Nef. Interacts with host TBP; this interaction modulates the activity of transcriptional pre-initiation complex. Interacts with host RELA. Interacts with host PLSCR1; this interaction negatively regulates Tat transactivation activity by altering its subcellular distribution. Asymmetrical arginine methylation by host PRMT6 seems to diminish the transactivation capacity of Tat and affects the interaction with host CCNT1. Post-translationally, acetylation by EP300, CREBBP, GCN5L2/GCN5 and PCAF regulates the transactivation activity of Tat. EP300-mediated acetylation of Lys-50 promotes dissociation of Tat from the TAR RNA through the competitive binding to PCAF's bromodomain. In addition, the non-acetylated Tat's N-terminus can also interact with PCAF. PCAF-mediated acetylation of Lys-28 enhances Tat's binding to CCNT1. Lys-50 is deacetylated by SIRT1. In terms of processing, polyubiquitination by host MDM2 does not target Tat to degradation, but activates its transactivation function and fosters interaction with CCNT1 and TAR RNA. Phosphorylated by EIF2AK2 on serine and threonine residues adjacent to the basic region important for TAR RNA binding and function. Phosphorylation of Tat by EIF2AK2 is dependent on the prior activation of EIF2AK2 by dsRNA.

The protein localises to the host nucleus. It is found in the host nucleolus. Its subcellular location is the host cytoplasm. The protein resides in the secreted. Functionally, transcriptional activator that increases RNA Pol II processivity, thereby increasing the level of full-length viral transcripts. Recognizes a hairpin structure at the 5'-LTR of the nascent viral mRNAs referred to as the transactivation responsive RNA element (TAR) and recruits the cyclin T1-CDK9 complex (P-TEFb complex) that will in turn hyperphosphorylate the RNA polymerase II to allow efficient elongation. The CDK9 component of P-TEFb and other Tat-activated kinases hyperphosphorylate the C-terminus of RNA Pol II that becomes stabilized and much more processive. Other factors such as HTATSF1/Tat-SF1, SUPT5H/SPT5, and HTATIP2 are also important for Tat's function. Besides its effect on RNA Pol II processivity, Tat induces chromatin remodeling of proviral genes by recruiting the histone acetyltransferases (HATs) CREBBP, EP300 and PCAF to the chromatin. This also contributes to the increase in proviral transcription rate, especially when the provirus integrates in transcriptionally silent region of the host genome. To ensure maximal activation of the LTR, Tat mediates nuclear translocation of NF-kappa-B by interacting with host RELA. Through its interaction with host TBP, Tat may also modulate transcription initiation. Tat can reactivate a latently infected cell by penetrating in it and transactivating its LTR promoter. In the cytoplasm, Tat is thought to act as a translational activator of HIV-1 mRNAs. Extracellular circulating Tat can be endocytosed by surrounding uninfected cells via the binding to several surface receptors such as CD26, CXCR4, heparan sulfate proteoglycans (HSPG) or LDLR. Neurons are rarely infected, but they internalize Tat via their LDLR. Through its interaction with nuclear HATs, Tat is potentially able to control the acetylation-dependent cellular gene expression. Modulates the expression of many cellular genes involved in cell survival, proliferation or in coding for cytokines or cytokine receptors. Tat plays a role in T-cell and neurons apoptosis. Tat induced neurotoxicity and apoptosis probably contribute to neuroAIDS. Circulating Tat also acts as a chemokine-like and/or growth factor-like molecule that binds to specific receptors on the surface of the cells, affecting many cellular pathways. In the vascular system, Tat binds to ITGAV/ITGB3 and ITGA5/ITGB1 integrins dimers at the surface of endothelial cells and competes with bFGF for heparin-binding sites, leading to an excess of soluble bFGF. This chain is Protein Tat, found in Homo sapiens (Human).